A 248-amino-acid polypeptide reads, in one-letter code: Ribonuclease PH (248 aa).

Residues arginine 86 and 124-126 (GTR) each bind phosphate.

This sequence belongs to the RNase PH family. As to quaternary structure, homohexameric ring arranged as a trimer of dimers.

It carries out the reaction tRNA(n+1) + phosphate = tRNA(n) + a ribonucleoside 5'-diphosphate. Functionally, phosphorolytic 3'-5' exoribonuclease that plays an important role in tRNA 3'-end maturation. Removes nucleotide residues following the 3'-CCA terminus of tRNAs; can also add nucleotides to the ends of RNA molecules by using nucleoside diphosphates as substrates, but this may not be physiologically important. Probably plays a role in initiation of 16S rRNA degradation (leading to ribosome degradation) during starvation. The protein is Ribonuclease PH of Clostridium kluyveri (strain NBRC 12016).